The chain runs to 487 residues: Homoserine O-acetyltransferase (487 aa).

In terms of domain architecture, AB hydrolase-1 spans 45–352; sequence NVILVCHPLT…PHGHDGFLLE (308 aa). Serine 150 acts as the Nucleophile in catalysis. Arginine 219 is a binding site for substrate. Catalysis depends on residues aspartate 313 and histidine 346. Residue aspartate 347 participates in substrate binding. CBS domains are found at residues 373–430 and 434–487; these read MTNN…FQDL and MTKD…EVLQ.

This sequence belongs to the AB hydrolase superfamily. MetX family. As to quaternary structure, homodimer.

Its subcellular location is the cytoplasm. The catalysed reaction is L-homoserine + acetyl-CoA = O-acetyl-L-homoserine + CoA. Its pathway is amino-acid biosynthesis; L-methionine biosynthesis via de novo pathway; O-acetyl-L-homoserine from L-homoserine: step 1/1. In terms of biological role, transfers an acetyl group from acetyl-CoA to L-homoserine, forming acetyl-L-homoserine. This is Homoserine O-acetyltransferase from Methanocorpusculum labreanum (strain ATCC 43576 / DSM 4855 / Z).